The following is a 495-amino-acid chain: ATP synthase subunit beta, chloroplastic (495 aa).

172–179 (GGAGVGKT) provides a ligand contact to ATP.

This sequence belongs to the ATPase alpha/beta chains family. As to quaternary structure, F-type ATPases have 2 components, CF(1) - the catalytic core - and CF(0) - the membrane proton channel. CF(1) has five subunits: alpha(3), beta(3), gamma(1), delta(1), epsilon(1). CF(0) has four main subunits: a(1), b(1), b'(1) and c(9-12).

The protein resides in the plastid. It is found in the chloroplast thylakoid membrane. It carries out the reaction ATP + H2O + 4 H(+)(in) = ADP + phosphate + 5 H(+)(out). Its function is as follows. Produces ATP from ADP in the presence of a proton gradient across the membrane. The catalytic sites are hosted primarily by the beta subunits. In Eucomis bicolor (King's flower), this protein is ATP synthase subunit beta, chloroplastic.